A 123-amino-acid chain; its full sequence is Large ribosomal subunit protein uL18 (123 aa).

This sequence belongs to the universal ribosomal protein uL18 family. In terms of assembly, part of the 50S ribosomal subunit; part of the 5S rRNA/L5/L18/L25 subcomplex. Contacts the 5S and 23S rRNAs.

This is one of the proteins that bind and probably mediate the attachment of the 5S RNA into the large ribosomal subunit, where it forms part of the central protuberance. The protein is Large ribosomal subunit protein uL18 of Symbiobacterium thermophilum (strain DSM 24528 / JCM 14929 / IAM 14863 / T).